Consider the following 384-residue polypeptide: NAD-capped RNA hydrolase NPY1 (384 aa).

Cys179, Cys182, Cys197, and Cys206 together coordinate Zn(2+). One can recognise a Nudix hydrolase domain in the interval 219-351 (PRTDPTVIIA…AGGYRVPFKN (133 aa)). Residues Ala256, Glu272, Glu276, and Glu322 each coordinate Mg(2+). Substrate-binding positions include 256 to 258 (AGF), Glu272, Glu276, and Glu322. A Nudix box motif is present at residues 257–278 (GFMEPSETIEEACIREIWEETG). A Microbody targeting signal motif is present at residues 378–380 (KTS).

This sequence belongs to the Nudix hydrolase family. NudC subfamily. As to quaternary structure, homodimer. Mg(2+) is required as a cofactor. The cofactor is Zn(2+).

It is found in the peroxisome. The enzyme catalyses a 5'-end NAD(+)-phospho-ribonucleoside in mRNA + H2O = a 5'-end phospho-adenosine-phospho-ribonucleoside in mRNA + beta-nicotinamide D-ribonucleotide + 2 H(+). It carries out the reaction NAD(+) + H2O = beta-nicotinamide D-ribonucleotide + AMP + 2 H(+). It catalyses the reaction NADH + H2O = reduced beta-nicotinamide D-ribonucleotide + AMP + 2 H(+). Functionally, mRNA decapping enzyme that specifically removes the nicotinamide adenine dinucleotide (NAD) cap from a subset of mRNAs by hydrolyzing the diphosphate linkage to produce nicotinamide mononucleotide (NMN) and 5' monophosphate mRNA. The NAD-cap is present at the 5'-end of some RNAs; in contrast to the canonical N7 methylguanosine (m7G) cap, the NAD cap promotes mRNA decay. Mediates the hydrolysis of some nucleoside diphosphate derivatives. In Saccharomyces cerevisiae (strain ATCC 204508 / S288c) (Baker's yeast), this protein is NAD-capped RNA hydrolase NPY1.